A 134-amino-acid polypeptide reads, in one-letter code: Large ribosomal subunit protein uL22 (134 aa).

The protein belongs to the universal ribosomal protein uL22 family. Part of the 50S ribosomal subunit.

Functionally, this protein binds specifically to 23S rRNA; its binding is stimulated by other ribosomal proteins, e.g. L4, L17, and L20. It is important during the early stages of 50S assembly. It makes multiple contacts with different domains of the 23S rRNA in the assembled 50S subunit and ribosome. Its function is as follows. The globular domain of the protein is located near the polypeptide exit tunnel on the outside of the subunit, while an extended beta-hairpin is found that lines the wall of the exit tunnel in the center of the 70S ribosome. This Porphyromonas gingivalis (strain ATCC 33277 / DSM 20709 / CIP 103683 / JCM 12257 / NCTC 11834 / 2561) protein is Large ribosomal subunit protein uL22.